Reading from the N-terminus, the 167-residue chain is MNKKPTKDKANGAKATKTIALNKRARHEYHLEERYEAGLALQGWEIKAIRAGRANIVDGYAYVRSGEIYLIGAQITPLIQASTHTVPVERRDRKLLLHRAEIDKVLTRVEREGYTLVPTALYWSSNKVKLEIALAKGKQNHDKRDAAKERDWQRDKQRVMRRHNRDA.

Over residues 139-158 (QNHDKRDAAKERDWQRDKQR) the composition is skewed to basic and acidic residues. The interval 139-167 (QNHDKRDAAKERDWQRDKQRVMRRHNRDA) is disordered.

Belongs to the SmpB family.

The protein resides in the cytoplasm. Functionally, required for rescue of stalled ribosomes mediated by trans-translation. Binds to transfer-messenger RNA (tmRNA), required for stable association of tmRNA with ribosomes. tmRNA and SmpB together mimic tRNA shape, replacing the anticodon stem-loop with SmpB. tmRNA is encoded by the ssrA gene; the 2 termini fold to resemble tRNA(Ala) and it encodes a 'tag peptide', a short internal open reading frame. During trans-translation Ala-aminoacylated tmRNA acts like a tRNA, entering the A-site of stalled ribosomes, displacing the stalled mRNA. The ribosome then switches to translate the ORF on the tmRNA; the nascent peptide is terminated with the 'tag peptide' encoded by the tmRNA and targeted for degradation. The ribosome is freed to recommence translation, which seems to be the essential function of trans-translation. The protein is SsrA-binding protein of Xanthomonas oryzae pv. oryzae (strain MAFF 311018).